We begin with the raw amino-acid sequence, 959 residues long: Protein moonraker (959 aa).

A disordered region spans residues Leu-124–Val-156. The span at Thr-134–Asp-145 shows a compositional bias: basic and acidic residues. Phosphoserine is present on Ser-279. Basic and acidic residues predominate over residues Glu-456–Asp-470. Disordered regions lie at residues Glu-456–Lys-560 and Arg-572–Ser-610. Residues Pro-515 to Leu-533 show a composition bias toward polar residues. Pro residues predominate over residues Trp-547–Ser-558. Residues Gln-582–Ala-674 adopt a coiled-coil conformation. Over residues Glu-583 to Ala-599 the composition is skewed to basic and acidic residues. Position 691 is a phosphoserine (Ser-691). 2 disordered regions span residues Ser-692–Pro-721 and Leu-848–Val-883. Positions Ala-707–Ala-717 are enriched in low complexity. Basic and acidic residues predominate over residues Gly-857–Gln-874. A necessary and sufficient for CEP20-binding region spans residues Gly-877–Ala-959.

In terms of assembly, interacts with CEP63 and WDR62. Forms a complex with OFD1 and CEP20/FOR20. Interacts with PCM1.

It is found in the cytoplasm. It localises to the cytoskeleton. Its subcellular location is the microtubule organizing center. The protein localises to the centrosome. The protein resides in the centriolar satellite. Involved in centriole duplication. Positively regulates CEP63 centrosomal localization. Required for WDR62 centrosomal localization and promotes the centrosomal localization of CDK2. May play a role in cilium assembly. This is Protein moonraker (Kiaa0753) from Mus musculus (Mouse).